The following is a 446-amino-acid chain: Na(+)-translocating NADH-quinone reductase subunit A (446 aa).

It belongs to the NqrA family. In terms of assembly, composed of six subunits; NqrA, NqrB, NqrC, NqrD, NqrE and NqrF.

It carries out the reaction a ubiquinone + n Na(+)(in) + NADH + H(+) = a ubiquinol + n Na(+)(out) + NAD(+). Functionally, NQR complex catalyzes the reduction of ubiquinone-1 to ubiquinol by two successive reactions, coupled with the transport of Na(+) ions from the cytoplasm to the periplasm. NqrA to NqrE are probably involved in the second step, the conversion of ubisemiquinone to ubiquinol. The polypeptide is Na(+)-translocating NADH-quinone reductase subunit A (Pasteurella multocida (strain Pm70)).